The sequence spans 488 residues: Cytochrome P450 family 716 subfamily AD polypeptide 2 (488 aa).

Residues 5 to 25 (LLLLSTLLILTLCCHFFYLFI) form a helical membrane-spanning segment. C433 serves as a coordination point for heme.

It belongs to the cytochrome P450 family. Heme serves as cofactor. As to expression, expressed in maturing fruits and in juice vesicles.

The protein localises to the membrane. The enzyme catalyses (1R,2R,3S,8R,10R,11R,15S,16S)-3-(acetyloxy)-15-[(4R)-4-[(2S)-3,3-dimethyloxiran-2-yl]-1,4-dihydroxybutan-2-yl]-2,7,7,11,16-pentamethyl-5-oxo-6-oxatetracyclo[9.7.0.0(2,8).0(12,16)]octadec-12-en-10-yl acetate + reduced [NADPH--hemoprotein reductase] + O2 = (1R,2R,3S,8R,10R,11R,15S,16S)-3-(acetyloxy)-15-(1-hydroxy-4-oxobutan-2-yl)-2,7,7,11,16-pentamethyl-5-oxo-6-oxatetracyclo[9.7.0.0(2,8).0(12,16)]octadec-12-en-10-yl acetate + 2-methylpropanoate + oxidized [NADPH--hemoprotein reductase] + H2O + 2 H(+). It participates in secondary metabolite biosynthesis; terpenoid biosynthesis. In terms of biological role, monooxygenase involved in the biosynthesis of limonoids triterpene natural products such as limonin, a compound with insecticidal activity responsible for the bitter taste in citrus. Catalyzes the formation of (1R,2R,3S,8R,10R,11R,15S,16S)-3-(acetyloxy)-15-(1-hydroxy-4-oxobutan-2-yl)-2,7,7,11,16-pentamethyl-5-oxo-6-oxatetracyclo[9.7.0.0(2,8).0(12,16)]octadec-12-en-10-yl acetate. This is Cytochrome P450 family 716 subfamily AD polypeptide 2 from Citrus sinensis (Sweet orange).